The sequence spans 123 residues: Thioredoxin domain-containing protein 17 (123 aa).

Ala2 carries the N-acetylalanine modification. One can recognise a Thioredoxin domain in the interval Ser41–Asp123. Residues Cys43 and Cys46 each act as nucleophile in the active site. Cys43 and Cys46 form a disulfide bridge.

Belongs to the thioredoxin family. In terms of assembly, interacts with TRXR1 and DYNLL1/DNCL1. The oxidized protein is reduced by TRXR1. In terms of tissue distribution, ubiquitously expressed in cell lines.

The protein resides in the cytoplasm. In terms of biological role, disulfide reductase. May participate in various redox reactions through the reversible oxidation of its active center dithiol to a disulfide and catalyze dithiol-disulfide exchange reactions. Modulates TNF-alpha signaling and NF-kappa-B activation. Has peroxidase activity and may contribute to the elimination of cellular hydrogen peroxide. In Homo sapiens (Human), this protein is Thioredoxin domain-containing protein 17 (TXNDC17).